A 217-amino-acid chain; its full sequence is Probable GTP-binding protein EngB (217 aa).

Residues 33–217 (GPTEIAFAGR…RAAIELAVAR (185 aa)) enclose the EngB-type G domain. GTP is bound by residues 41-48 (GRSNVGKS), 68-72 (GRTQE), 95-98 (DMPG), 162-165 (TKTD), and 196-198 (TSS). Positions 48 and 70 each coordinate Mg(2+).

It belongs to the TRAFAC class TrmE-Era-EngA-EngB-Septin-like GTPase superfamily. EngB GTPase family. It depends on Mg(2+) as a cofactor.

In terms of biological role, necessary for normal cell division and for the maintenance of normal septation. The polypeptide is Probable GTP-binding protein EngB (Sinorhizobium medicae (strain WSM419) (Ensifer medicae)).